The following is a 279-amino-acid chain: Armadillo repeat-containing protein 1 (279 aa).

One copy of the ARM repeat lies at 36–78; sequence GCLPGLILFLDHPSPPVVHSALLALRYLAECRANREKMKGELG. The tract at residues 236–257 is disordered; sequence EYLPEDESPSKEQDKAVSRVGS. Over residues 243 to 252 the composition is skewed to basic and acidic residues; sequence SPSKEQDKAV.

As to quaternary structure, interacts with mitochondrial contact site and cristae organizing system (MICOS) complex components IMMT/MIC60 and MICOS10/MIC10. Interacts with mitochondrial outer membrane sorting assembly machinery (SAM) complex components SAMM50 and MTX1.

It is found in the cytoplasm. It localises to the mitochondrion. Its subcellular location is the mitochondrion outer membrane. In terms of biological role, in association with mitochondrial contact site and cristae organizing system (MICOS) complex components and mitochondrial outer membrane sorting assembly machinery (SAM) complex components may regulate mitochondrial dynamics playing a role in determining mitochondrial length, distribution and motility. This chain is Armadillo repeat-containing protein 1 (ARMC1), found in Gallus gallus (Chicken).